We begin with the raw amino-acid sequence, 397 residues long: Cercosporin biosynthesis regulatory protein CTB8 (397 aa).

A DNA-binding region (zn(2)-C6 fungal-type) is located at residues 26 to 53 (CTHCSSQKIRCTKERPACARCVNKGLLC). 2 disordered regions span residues 62–92 (GTRR…DSVK) and 173–198 (AEAS…ATTH). A compositionally biased stretch (polar residues) spans 74 to 87 (PETTISNAPTSSVP). Residues 179–197 (PSSSSSPPSQRSDGGRATT) are compositionally biased toward low complexity.

Its subcellular location is the nucleus. Transcription regulator of the gene cluster that mediates the biosynthesis of cercosporin, a light-activated, non-host-selective toxin. The perylenequinone chromophore of cercosporin absorbs light energy to attain an electronically-activated triplet state and produces active oxygen species such as the hydroxyl radical, superoxide, hydrogen peroxide or singlet oxygen upon reaction with oxygen molecules. These reactive oxygen species cause damage to various cellular components including lipids, proteins and nucleic acids. In Cercospora nicotianae (Barn spot disease fungus), this protein is Cercosporin biosynthesis regulatory protein CTB8.